We begin with the raw amino-acid sequence, 412 residues long: L-cysteine:1D-myo-inositol 2-amino-2-deoxy-alpha-D-glucopyranoside ligase (412 aa).

Residue Cys-45 participates in Zn(2+) binding. L-cysteinyl-5'-AMP-binding positions include 45–48 (CGIT), Thr-60, and 83–85 (NIT). The 'HIGH' region signature appears at 47–57 (ITPYDAAHLGH). Residues 185–190 (ERGGDP) carry the 'ERGGDP' region motif. An L-cysteinyl-5'-AMP-binding site is contributed by Trp-225. A Zn(2+)-binding site is contributed by Cys-229. L-cysteinyl-5'-AMP is bound at residue 247-249 (GDD). Residue His-254 participates in Zn(2+) binding. Residue Val-281 coordinates L-cysteinyl-5'-AMP. Residues 287 to 291 (KMSKS) carry the 'KMSKS' region motif.

The protein belongs to the class-I aminoacyl-tRNA synthetase family. MshC subfamily. Monomer. Zn(2+) is required as a cofactor.

It carries out the reaction 1D-myo-inositol 2-amino-2-deoxy-alpha-D-glucopyranoside + L-cysteine + ATP = 1D-myo-inositol 2-(L-cysteinylamino)-2-deoxy-alpha-D-glucopyranoside + AMP + diphosphate + H(+). Its function is as follows. Catalyzes the ATP-dependent condensation of GlcN-Ins and L-cysteine to form L-Cys-GlcN-Ins. The sequence is that of L-cysteine:1D-myo-inositol 2-amino-2-deoxy-alpha-D-glucopyranoside ligase from Thermobifida fusca (strain YX).